We begin with the raw amino-acid sequence, 353 residues long: tRNA N6-adenosine threonylcarbamoyltransferase (353 aa).

Fe cation-binding residues include H111 and H115. Substrate-binding positions include 148-152 (LVSGG), D181, G194, and N286. D314 contacts Fe cation.

It belongs to the KAE1 / TsaD family. Fe(2+) is required as a cofactor.

It localises to the cytoplasm. The catalysed reaction is L-threonylcarbamoyladenylate + adenosine(37) in tRNA = N(6)-L-threonylcarbamoyladenosine(37) in tRNA + AMP + H(+). In terms of biological role, required for the formation of a threonylcarbamoyl group on adenosine at position 37 (t(6)A37) in tRNAs that read codons beginning with adenine. Is involved in the transfer of the threonylcarbamoyl moiety of threonylcarbamoyl-AMP (TC-AMP) to the N6 group of A37, together with TsaE and TsaB. TsaD likely plays a direct catalytic role in this reaction. The polypeptide is tRNA N6-adenosine threonylcarbamoyltransferase (Blochmanniella floridana).